The sequence spans 239 residues: Ubiquinone biosynthesis O-methyltransferase (239 aa).

Arginine 42, glycine 62, aspartate 83, and methionine 127 together coordinate S-adenosyl-L-methionine.

It belongs to the methyltransferase superfamily. UbiG/COQ3 family.

It catalyses the reaction a 3-demethylubiquinol + S-adenosyl-L-methionine = a ubiquinol + S-adenosyl-L-homocysteine + H(+). The catalysed reaction is a 3-(all-trans-polyprenyl)benzene-1,2-diol + S-adenosyl-L-methionine = a 2-methoxy-6-(all-trans-polyprenyl)phenol + S-adenosyl-L-homocysteine + H(+). The protein operates within cofactor biosynthesis; ubiquinone biosynthesis. O-methyltransferase that catalyzes the 2 O-methylation steps in the ubiquinone biosynthetic pathway. The chain is Ubiquinone biosynthesis O-methyltransferase from Pectobacterium carotovorum subsp. carotovorum (strain PC1).